We begin with the raw amino-acid sequence, 568 residues long: Zinc finger protein 76 (568 aa).

Lys-24 participates in a covalent cross-link: Glycyl lysine isopeptide (Lys-Gly) (interchain with G-Cter in SUMO2). 3 repeat units span residues 34–45 (IQLEDGTTAYIH), 62–73 (VQLEDGSMAYIH), and 88–99 (VQLEDGSTAYIH). The tract at residues 34 to 99 (IQLEDGTTAY…LEDGSTAYIH (66 aa)) is 3 X 12 AA approximate repeats. C2H2-type zinc fingers lie at residues 165-189 (FRCG…ERAH), 195-219 (YRCD…VRTH), 225-249 (YKCP…VRTH), 255-279 (FRCP…VRTH), 285-309 (YTCP…VRIH), 315-339 (YVCT…HVVH), and 345-368 (YTCS…RSAH). Residues 365 to 402 (RSAHGELEATEESEQALYEQQQLEAASAAEESPPPKPT) form a disordered region. Over residues 379-395 (QALYEQQQLEAASAAEE) the composition is skewed to low complexity.

It belongs to the krueppel C2H2-type zinc-finger protein family.

The protein localises to the nucleus. Functionally, may be involved in transcriptional regulation. This Mus musculus (Mouse) protein is Zinc finger protein 76 (Znf76).